The chain runs to 23 residues: Profilin (23 aa).

Belongs to the profilin family. In terms of assembly, occurs in many kinds of cells as a complex with monomeric actin in a 1:1 ratio.

The protein resides in the cytoplasm. It localises to the cytoskeleton. Its function is as follows. Binds to actin and affects the structure of the cytoskeleton. At high concentrations, profilin prevents the polymerization of actin, whereas it enhances it at low concentrations. By binding to PIP2, it inhibits the formation of IP3 and DG. In Beta vulgaris (Sugar beet), this protein is Profilin.